Reading from the N-terminus, the 372-residue chain is uncharacterized protein (372 aa).

The chain crosses the membrane as a helical span at residues 224–244 (GSTVGVVIGVVIVIFIGFIII). Position 329 is a phosphoserine (serine 329).

The protein localises to the vacuole membrane. This is an uncharacterized protein from Saccharomyces cerevisiae (strain ATCC 204508 / S288c) (Baker's yeast).